Here is a 688-residue protein sequence, read N- to C-terminus: Glycine--tRNA ligase beta subunit (688 aa).

Belongs to the class-II aminoacyl-tRNA synthetase family. In terms of assembly, tetramer of two alpha and two beta subunits.

It is found in the cytoplasm. The catalysed reaction is tRNA(Gly) + glycine + ATP = glycyl-tRNA(Gly) + AMP + diphosphate. The sequence is that of Glycine--tRNA ligase beta subunit from Desulforudis audaxviator (strain MP104C).